Here is a 271-residue protein sequence, read N- to C-terminus: Dioscorin dioA3 (271 aa).

The N-terminal stretch at 1–21 is a signal peptide; sequence MSSSTLLHLLLLSSLLFSCLS. An Alpha-carbonic anhydrase domain is found at 28–262; the sequence is DEFSYIEGNP…TNFRSVFYFE (235 aa). A disulfide bridge links C53 with C212. Catalysis depends on H94, which acts as the Proton acceptor. L-ascorbate is bound by residues D95, 120 to 122, Q139, and 208 to 209; these read HFH and TA.

This sequence belongs to the alpha-carbonic anhydrase family. In terms of assembly, monomer. Homodimer. Not glycosylated. As to expression, expressed in tuber (at protein level).

The enzyme catalyses hydrogencarbonate + H(+) = CO2 + H2O. It carries out the reaction 2 monodehydro-L-ascorbate radical + NADH + H(+) = 2 L-ascorbate + NAD(+). The carbonate dehydratase activity is not substantially changed by the addition of Zn(2+). In terms of biological role, storage protein of tuber. Involved in protection against oxidative stress. Has carbonate dehydratase, trypsin inhibitor, dehydroascorbate (DHA) reductase and monodehydroascorbate (MDA) reductase activities. Catalyzes the reactions of carbonate dehydratase and DHA reductase independently of zinc and glutathione (GSH). The coupled reaction is capable of recycling a plant antioxidant ascorbate using ubiquitous compounds H(2)O and CO(2). Exhibits antioxidant activity. Able to scavenge 1,1-diphenyl-2-picrylhydrazyl (DPPH) radical. Exhibits immunomodulatory activity. Activates Toll-like receptor 4 signaling pathways by up-regulating the gene expression of pro-inflammatory cytokines, such as tumor necrosis factor alpha, interleukin-1 beta and interleukin-6, and chemokines RANTES and MCP-1, in mouse RAW 264.7 macrophages. Stimulates the phagocytosis of E.coli by the LPS-treated mouse macrophages. The chain is Dioscorin dioA3 from Dioscorea japonica (Japanese yam).